Consider the following 269-residue polypeptide: MLKKKNQFDYLNLSHVLSKKKNSGGGWINKISDKLSEINVAEYQVVSKHSNYLFYSRFGLLDTFVYFLFFLCFFLNNVLFLAGVFHTKQFTFNEVNGFNQFYLFWTVEKPTDIIQASITYQISQYGIANLVFGLISLALLVFLSFRWTVSLFFKSQTTKWERIGYTTGFFISIVVYLLWILLMVLFLVLLDQQFFERDTQKIQSATRFSLFFNVENNNGVYLSKLNSFGVFATAWAISLVFYSFFFIAIFAFNYNKTKLKQLFKKSKAK.

4 helical membrane-spanning segments follow: residues phenylalanine 64 to valine 84, tyrosine 125 to phenylalanine 145, phenylalanine 169 to leucine 189, and valine 230 to phenylalanine 250.

The protein resides in the cell membrane. This is an uncharacterized protein from Mycoplasma genitalium (strain ATCC 33530 / DSM 19775 / NCTC 10195 / G37) (Mycoplasmoides genitalium).